Reading from the N-terminus, the 221-residue chain is tRNA (guanine-N(7)-)-methyltransferase (221 aa).

Residues glutamate 46, aspartate 71, and aspartate 120 each contribute to the S-adenosyl-L-methionine site. Aspartate 120 is an active-site residue. Aspartate 156 is a substrate binding site.

It belongs to the class I-like SAM-binding methyltransferase superfamily. TrmB family.

The enzyme catalyses guanosine(46) in tRNA + S-adenosyl-L-methionine = N(7)-methylguanosine(46) in tRNA + S-adenosyl-L-homocysteine. The protein operates within tRNA modification; N(7)-methylguanine-tRNA biosynthesis. In terms of biological role, catalyzes the formation of N(7)-methylguanine at position 46 (m7G46) in tRNA. The chain is tRNA (guanine-N(7)-)-methyltransferase from Cytophaga hutchinsonii (strain ATCC 33406 / DSM 1761 / CIP 103989 / NBRC 15051 / NCIMB 9469 / D465).